A 232-amino-acid chain; its full sequence is tRNA (guanine-N(1)-)-methyltransferase (232 aa).

S-adenosyl-L-methionine-binding positions include G111 and 131-136 (IGDYIL).

The protein belongs to the RNA methyltransferase TrmD family. Homodimer.

The protein resides in the cytoplasm. It carries out the reaction guanosine(37) in tRNA + S-adenosyl-L-methionine = N(1)-methylguanosine(37) in tRNA + S-adenosyl-L-homocysteine + H(+). Its function is as follows. Specifically methylates guanosine-37 in various tRNAs. The polypeptide is tRNA (guanine-N(1)-)-methyltransferase (Bartonella henselae (strain ATCC 49882 / DSM 28221 / CCUG 30454 / Houston 1) (Rochalimaea henselae)).